The primary structure comprises 213 residues: Putative 3-methyladenine DNA glycosylase (213 aa).

Positions 165–187 (GTPVPPDQVRNGPRTGVSGDGGV) are disordered.

The protein belongs to the DNA glycosylase MPG family.

The sequence is that of Putative 3-methyladenine DNA glycosylase from Streptomyces avermitilis (strain ATCC 31267 / DSM 46492 / JCM 5070 / NBRC 14893 / NCIMB 12804 / NRRL 8165 / MA-4680).